A 423-amino-acid chain; its full sequence is Histidine--tRNA ligase (423 aa).

It belongs to the class-II aminoacyl-tRNA synthetase family. As to quaternary structure, homodimer.

It localises to the cytoplasm. It catalyses the reaction tRNA(His) + L-histidine + ATP = L-histidyl-tRNA(His) + AMP + diphosphate + H(+). The sequence is that of Histidine--tRNA ligase from Phytoplasma mali (strain AT).